Reading from the N-terminus, the 72-residue chain is DNA-directed RNA polymerase subunit omega (72 aa).

Belongs to the RNA polymerase subunit omega family. The RNAP catalytic core consists of 2 alpha, 1 beta, 1 beta' and 1 omega subunit. When a sigma factor is associated with the core the holoenzyme is formed, which can initiate transcription.

It catalyses the reaction RNA(n) + a ribonucleoside 5'-triphosphate = RNA(n+1) + diphosphate. In terms of biological role, promotes RNA polymerase assembly. Latches the N- and C-terminal regions of the beta' subunit thereby facilitating its interaction with the beta and alpha subunits. This chain is DNA-directed RNA polymerase subunit omega, found in Campylobacter lari (strain RM2100 / D67 / ATCC BAA-1060).